The sequence spans 239 residues: Endoglucanase A (239 aa).

Positions 1 to 16 (MKLSMTLSLFAATAMG) are cleaved as a signal peptide.

The protein belongs to the glycosyl hydrolase 12 (cellulase H) family.

The enzyme catalyses Endohydrolysis of (1-&gt;4)-beta-D-glucosidic linkages in cellulose, lichenin and cereal beta-D-glucans.. In terms of biological role, has carboxylmethylcellulase activity. The chain is Endoglucanase A (cekA) from Aspergillus kawachii (strain NBRC 4308) (White koji mold).